The chain runs to 65 residues: Large ribosomal subunit protein uL29 (65 aa).

The protein belongs to the universal ribosomal protein uL29 family.

In Borreliella burgdorferi (strain ATCC 35210 / DSM 4680 / CIP 102532 / B31) (Borrelia burgdorferi), this protein is Large ribosomal subunit protein uL29 (rpmC).